The chain runs to 44 residues: Thymosin beta-4, Y-chromosomal (44 aa).

The tract at residues 1 to 44 (MSDKPGMAEIEKFDKSKLKKTETQEKNPLSSKETIEQERQAGES) is disordered. 2 stretches are compositionally biased toward basic and acidic residues: residues 9-25 (EIEK…ETQE) and 33-44 (ETIEQERQAGES).

Belongs to the thymosin beta family. As to expression, ubiquitous.

It localises to the cytoplasm. Its subcellular location is the cytoskeleton. Plays an important role in the organization of the cytoskeleton. Binds to and sequesters actin monomers (G actin) and therefore inhibits actin polymerization. This chain is Thymosin beta-4, Y-chromosomal (TMSB4Y), found in Homo sapiens (Human).